A 218-amino-acid polypeptide reads, in one-letter code: Large ribosomal subunit protein uL3c (218 aa).

Positions 127–161 (GFSRGPMTHGSKNHREPGSTGAGTTPGRIYPGKRM) are disordered.

The protein belongs to the universal ribosomal protein uL3 family. Part of the 50S ribosomal subunit.

The protein localises to the plastid. The protein resides in the organellar chromatophore. Its function is as follows. One of the primary rRNA binding proteins, it binds directly near the 3'-end of the 23S rRNA, where it nucleates assembly of the 50S subunit. The chain is Large ribosomal subunit protein uL3c (rpl3) from Paulinella chromatophora.